A 239-amino-acid polypeptide reads, in one-letter code: Ribosomal RNA small subunit methyltransferase G (239 aa).

S-adenosyl-L-methionine contacts are provided by residues glycine 75, leucine 80, 126–127 (AE), and arginine 142.

Belongs to the methyltransferase superfamily. RNA methyltransferase RsmG family.

It is found in the cytoplasm. Its function is as follows. Specifically methylates the N7 position of guanine in position 518 of 16S rRNA. The polypeptide is Ribosomal RNA small subunit methyltransferase G (Streptomyces coelicolor (strain ATCC BAA-471 / A3(2) / M145)).